The following is a 163-amino-acid chain: Disulfide bond formation protein B (163 aa).

Over 1–9 (MRLASPRSL) the chain is Cytoplasmic. Residues 10–26 (FVIAFLGSALLIAIALY) form a helical membrane-spanning segment. Over 27–44 (MEHVMGLAPCPLCIVQRI) the chain is Periplasmic. Cys36 and Cys39 are oxidised to a cystine. A helical membrane pass occupies residues 45–61 (CVIGFGLVCLVAAIHGP). Residues 62–67 (AKVGRR) lie on the Cytoplasmic side of the membrane. A helical transmembrane segment spans residues 68–85 (VYAAIAALFVAAGAATAI). Over 86–142 (RQIWLQSVPADQLPSCLPSLEYMMEALPFQEIARLVLHGTAECAEVSWTMLGMSIPE) the chain is Periplasmic. A disulfide bridge links Cys101 with Cys128. The chain crosses the membrane as a helical span at residues 143-161 (WSLLGFIGMAIVCLWQLLR). The Cytoplasmic portion of the chain corresponds to 162 to 163 (RD).

Belongs to the DsbB family.

It is found in the cell inner membrane. Its function is as follows. Required for disulfide bond formation in some periplasmic proteins. Acts by oxidizing the DsbA protein. The chain is Disulfide bond formation protein B from Stutzerimonas stutzeri (strain A1501) (Pseudomonas stutzeri).